A 390-amino-acid chain; its full sequence is Chorismate synthase 2 (390 aa).

NADP(+) is bound by residues R39 and R45. FMN is bound by residues 132-134 (RSS), 253-254 (NA), G298, 313-317 (KPIPT), and R339.

It belongs to the chorismate synthase family. Homotetramer. FMNH2 is required as a cofactor.

The enzyme catalyses 5-O-(1-carboxyvinyl)-3-phosphoshikimate = chorismate + phosphate. Its pathway is metabolic intermediate biosynthesis; chorismate biosynthesis; chorismate from D-erythrose 4-phosphate and phosphoenolpyruvate: step 7/7. Catalyzes the anti-1,4-elimination of the C-3 phosphate and the C-6 proR hydrogen from 5-enolpyruvylshikimate-3-phosphate (EPSP) to yield chorismate, which is the branch point compound that serves as the starting substrate for the three terminal pathways of aromatic amino acid biosynthesis. This reaction introduces a second double bond into the aromatic ring system. The chain is Chorismate synthase 2 from Bacillus cereus (strain ZK / E33L).